An 86-amino-acid polypeptide reads, in one-letter code: Small ribosomal subunit protein bS18 (86 aa).

This sequence belongs to the bacterial ribosomal protein bS18 family. In terms of assembly, part of the 30S ribosomal subunit. Forms a tight heterodimer with protein bS6.

In terms of biological role, binds as a heterodimer with protein bS6 to the central domain of the 16S rRNA, where it helps stabilize the platform of the 30S subunit. The protein is Small ribosomal subunit protein bS18 of Campylobacter concisus (strain 13826).